Here is a 203-residue protein sequence, read N- to C-terminus: MNNLTQGKFITFEGGEGSGKSTQSQMLYEYLKSQNTPVILTREVGGTIVSEKMREILVHEELLPMSELLQAMAARYDHMVRKIIPVLKEGYIVICDRFLDSTACYQGLELENGIDLVYNLHKTLMPPLMPDITFFIDVEPDTAIKRVNLRNMSNKFDIRGIDFYNKIYDCFKELSNRFPARIKTIKASDLSMLEVHELIKKHL.

14 to 21 (GGEGSGKS) is a binding site for ATP.

This sequence belongs to the thymidylate kinase family.

It carries out the reaction dTMP + ATP = dTDP + ADP. Its function is as follows. Phosphorylation of dTMP to form dTDP in both de novo and salvage pathways of dTTP synthesis. This Rickettsia canadensis (strain McKiel) protein is Thymidylate kinase.